The sequence spans 248 residues: MAGHSKWANIQHRKGRQDAKRGKIFTKMAKDIILAAKGGGDPAMNPSLRLAISKAKAVNMPNDKIDTAIKKGTGELAGGDISEVMYEGYGPGGVAILVEAATDNKNRTVAEVRHALGKGGGSMGEAGCVAWMFDKKGVMVFDAEKYTEDQLLEIGLEAGAEDVIAEDESLEVHCMPEDFSEVQKAFEAAECEAKSSDLAFVPKNLVEVDVPTAKKLMNLMEKLEDNDDVQNVHVNADFPDELMAEMED.

The interval M1–R21 is disordered.

It belongs to the TACO1 family.

It localises to the cytoplasm. This Maridesulfovibrio salexigens (strain ATCC 14822 / DSM 2638 / NCIMB 8403 / VKM B-1763) (Desulfovibrio salexigens) protein is Probable transcriptional regulatory protein Desal_2886.